The primary structure comprises 766 residues: Probable serine/threonine-protein kinase KKQ8 (766 aa).

Disordered stretches follow at residues 1 to 165 (MPEH…DTSS), 201 to 240 (GHYA…AAQL), 277 to 297 (SDAN…LDLP), 362 to 384 (TRSH…DDPS), and 417 to 437 (AAKN…AGVQ). The segment covering 14–25 (RSLSLGSSMRSL) has biased composition (low complexity). Basic and acidic residues predominate over residues 49–64 (VDIRVDTASASREHTP). Residues 94–120 (LTPTNSNPQSKSGSPVSQNTSQESLIT) show a composition bias toward polar residues. Basic and acidic residues predominate over residues 127–137 (EDYRPSKDSRR). 2 stretches are compositionally biased toward polar residues: residues 140–165 (RNAS…DTSS) and 214–223 (PTSSRVPSRS). The span at 288–297 (SKNDGHLDLP) shows a compositional bias: basic and acidic residues. Acidic residues predominate over residues 372-382 (DSSDDDEELDD). Basic residues predominate over residues 419 to 430 (KNKHNQSSKHRT). The 304-residue stretch at 449–752 (GKCVAVVGHG…IDKLLQTGWM (304 aa)) folds into the Protein kinase domain. ATP-binding positions include 455–463 (VGHGAYGVV) and Lys-493. The Proton acceptor role is filled by Asp-603.

Belongs to the protein kinase superfamily. CAMK Ser/Thr protein kinase family. NPR/HAL subfamily. HAL5 sub-subfamily.

Its subcellular location is the cytoplasm. The enzyme catalyses L-seryl-[protein] + ATP = O-phospho-L-seryl-[protein] + ADP + H(+). It catalyses the reaction L-threonyl-[protein] + ATP = O-phospho-L-threonyl-[protein] + ADP + H(+). In Candida glabrata (strain ATCC 2001 / BCRC 20586 / JCM 3761 / NBRC 0622 / NRRL Y-65 / CBS 138) (Yeast), this protein is Probable serine/threonine-protein kinase KKQ8 (KKQ8).